Here is a 186-residue protein sequence, read N- to C-terminus: Protein GrpE (186 aa).

Residues Met1 to Gln15 show a composition bias toward polar residues. The disordered stretch occupies residues Met1–Ala20.

This sequence belongs to the GrpE family. As to quaternary structure, homodimer.

The protein localises to the cytoplasm. In terms of biological role, participates actively in the response to hyperosmotic and heat shock by preventing the aggregation of stress-denatured proteins, in association with DnaK and GrpE. It is the nucleotide exchange factor for DnaK and may function as a thermosensor. Unfolded proteins bind initially to DnaJ; upon interaction with the DnaJ-bound protein, DnaK hydrolyzes its bound ATP, resulting in the formation of a stable complex. GrpE releases ADP from DnaK; ATP binding to DnaK triggers the release of the substrate protein, thus completing the reaction cycle. Several rounds of ATP-dependent interactions between DnaJ, DnaK and GrpE are required for fully efficient folding. The chain is Protein GrpE from Pseudomonas aeruginosa (strain LESB58).